Reading from the N-terminus, the 299-residue chain is dTDP-4-dehydrorhamnose reductase (299 aa).

NADH contacts are provided by residues 10 to 12 (GQV), aspartate 30, 39 to 40 (DF), and 63 to 65 (AHT). 11-12 (QV) lines the NADPH pocket. NADPH is bound by residues 39 to 40 (DF), 63 to 65 (AHT), and tyrosine 102. 104–105 (TD) is a binding site for dTDP-beta-L-rhamnose. Residues tyrosine 128 and lysine 132 each contribute to the NADH site. Residues tyrosine 128 and lysine 132 each contribute to the NADPH site. The Proton donor/acceptor role is filled by tyrosine 128. Residue tryptophan 153 participates in dTDP-beta-L-rhamnose binding.

It belongs to the dTDP-4-dehydrorhamnose reductase family. As to quaternary structure, homodimer. Requires Mg(2+) as cofactor.

It carries out the reaction dTDP-beta-L-rhamnose + NADP(+) = dTDP-4-dehydro-beta-L-rhamnose + NADPH + H(+). Its pathway is carbohydrate biosynthesis; dTDP-L-rhamnose biosynthesis. It functions in the pathway bacterial outer membrane biogenesis; LPS O-antigen biosynthesis. Functionally, involved in the biosynthesis of the dTDP-L-rhamnose which is an important component of lipopolysaccharide (LPS). Catalyzes the reduction of dTDP-6-deoxy-L-lyxo-4-hexulose to yield dTDP-L-rhamnose. RmlD uses NADH and NADPH nearly equally well. The sequence is that of dTDP-4-dehydrorhamnose reductase from Escherichia coli (strain K12).